The sequence spans 109 residues: UPF0235 protein MA_4097 (109 aa).

It belongs to the UPF0235 family.

This Methanosarcina acetivorans (strain ATCC 35395 / DSM 2834 / JCM 12185 / C2A) protein is UPF0235 protein MA_4097.